A 307-amino-acid chain; its full sequence is Methionyl-tRNA formyltransferase (307 aa).

108–111 (SLLP) lines the (6S)-5,6,7,8-tetrahydrofolate pocket.

Belongs to the Fmt family.

It carries out the reaction L-methionyl-tRNA(fMet) + (6R)-10-formyltetrahydrofolate = N-formyl-L-methionyl-tRNA(fMet) + (6S)-5,6,7,8-tetrahydrofolate + H(+). In terms of biological role, attaches a formyl group to the free amino group of methionyl-tRNA(fMet). The formyl group appears to play a dual role in the initiator identity of N-formylmethionyl-tRNA by promoting its recognition by IF2 and preventing the misappropriation of this tRNA by the elongation apparatus. In Stenotrophomonas maltophilia (strain K279a), this protein is Methionyl-tRNA formyltransferase.